We begin with the raw amino-acid sequence, 189 residues long: Flavin prenyltransferase UbiX (189 aa).

FMN contacts are provided by residues 11 to 13, Ser-37, 88 to 91, and Arg-123; these read GAS and SMRT. Residue Tyr-153 participates in dimethylallyl phosphate binding.

It belongs to the UbiX/PAD1 family.

It catalyses the reaction dimethylallyl phosphate + FMNH2 = prenylated FMNH2 + phosphate. Its function is as follows. Flavin prenyltransferase that catalyzes the synthesis of the prenylated FMN cofactor (prenyl-FMN) for 4-hydroxy-3-polyprenylbenzoic acid decarboxylase UbiD. The prenyltransferase is metal-independent and links a dimethylallyl moiety from dimethylallyl monophosphate (DMAP) to the flavin N5 and C6 atoms of FMN. The chain is Flavin prenyltransferase UbiX from Neisseria meningitidis serogroup B (strain ATCC BAA-335 / MC58).